A 436-amino-acid chain; its full sequence is ABC transporter permease YtrF (436 aa).

A signal peptide spans 1–31 (MRFKDQVHFIRRNMKKNRLRVFMTILATTMA). C32 carries the N-palmitoyl cysteine lipid modification. A lipid anchor (S-diacylglycerol cysteine) is attached at C32. A coiled-coil region spans residues 115–165 (NMNDELKANMELEKGRVAKSENEIVVGYDFAKRLLTKKESEEYNKKIEEAK). A run of 3 helical transmembrane segments spans residues 293 to 313 (FKIG…IGIF), 350 to 370 (YIGI…SYLV), and 396 to 416 (IPAS…VISG).

The protein belongs to the ABC-4 integral membrane protein family. As to quaternary structure, the complex is composed of 2 ATP-binding proteins (YtrB and YtrE), 2 transmembrane proteins (YtrC and YtrD) and a solute-binding protein (YtrF).

It is found in the cell membrane. Its function is as follows. Part of the ABC transporter complex YtrBCDEF that plays a role in acetoin utilization during stationary phase and sporulation. This is ABC transporter permease YtrF (ytrF) from Bacillus subtilis (strain 168).